A 67-amino-acid polypeptide reads, in one-letter code: MARITVEDCLKQIPNRFELALAATYRARQLVQGHTPKVDAKDKPTVTALREIASGQVGIEMLKKVPS.

This sequence belongs to the RNA polymerase subunit omega family. In terms of assembly, the RNAP catalytic core consists of 2 alpha, 1 beta, 1 beta' and 1 omega subunit. When a sigma factor is associated with the core the holoenzyme is formed, which can initiate transcription.

The catalysed reaction is RNA(n) + a ribonucleoside 5'-triphosphate = RNA(n+1) + diphosphate. Its function is as follows. Promotes RNA polymerase assembly. Latches the N- and C-terminal regions of the beta' subunit thereby facilitating its interaction with the beta and alpha subunits. The polypeptide is DNA-directed RNA polymerase subunit omega (Ralstonia pickettii (strain 12J)).